We begin with the raw amino-acid sequence, 371 residues long: Barbiturase 1 (371 aa).

Residues 1–103 (MPDAIEVRKV…TIFATVPPED (103 aa)) form an RU A region. Residues Arg-53 and 82–83 (SG) each bind substrate. The interval 115–250 (RLTVGFAMSE…AQVVVVGNAP (136 aa)) is RU B. The active site involves Lys-165. Substrate is bound by residues Asn-197 and 233 to 234 (SS). Residue Ser-233 is the Nucleophile of the active site. The tract at residues 256–371 (YRIGHSVMKD…GPVAAIVDLG (116 aa)) is RU C. Mg(2+) is bound at residue Glu-304. Substrate-binding positions include Lys-331 and 350 to 351 (SV). Ala-353, Gln-356, Gly-357, Pro-358, and Gly-361 together coordinate Mg(2+).

It belongs to the cyclic amide hydrolase (CyAH) family. As to quaternary structure, homotetramer.

It carries out the reaction barbiturate + H2O = 3-oxo-3-ureidopropanoate. It participates in pyrimidine metabolism; uracil degradation via oxidative pathway; malonate and urea from uracil: step 2/3. Its activity is regulated as follows. Inhibited by cyanuric acid. In terms of biological role, responsible for the hydrolysis of barbituric acid (2,4,6-trihydroxy-1,3-pyrimidine), an intermediate in the oxidative catabolism of pyrimidines. Catalyzes the hydrolytic opening of the pyrimidine ring of barbituric acid to yield ureidomalonic acid. This chain is Barbiturase 1, found in Nocardioides sp. (strain ATCC BAA-499 / JS614).